Consider the following 134-residue polypeptide: UPF0412 protein YaaI (134 aa).

An N-terminal signal peptide occupies residues 1-23 (MKSVFTISASLAISLMLCCTAQA).

The protein belongs to the UPF0412 family.

The protein is UPF0412 protein YaaI of Escherichia coli (strain ATCC 8739 / DSM 1576 / NBRC 3972 / NCIMB 8545 / WDCM 00012 / Crooks).